A 409-amino-acid polypeptide reads, in one-letter code: Glycogenin (409 aa).

3 residues coordinate UDP: Leu8, Tyr14, and Arg80. Positions 8, 14, 80, 89, 105, 107, 140, 141, 169, 172, and 173 each coordinate UDP-alpha-D-glucose. Asp105 and Asp107 together coordinate UDP. Mn(2+)-binding residues include Asp105 and Asp107. Tyr212 carries an O-linked (Glc...) tyrosine glycan. Residues His229, Gly232, and Lys235 each coordinate UDP. Position 229 (His229) interacts with Mn(2+). UDP-alpha-D-glucose contacts are provided by Gly232 and Lys235. The disordered stretch occupies residues 283-303 (RIEEDSHETEEKVDEEVSISE).

This sequence belongs to the glycosyltransferase 8 family. Glycogenin subfamily. Mn(2+) serves as cofactor.

It is found in the cytoplasm. The protein resides in the vacuole. The enzyme catalyses L-tyrosyl-[glycogenin] + UDP-alpha-D-glucose = alpha-D-glucosyl-L-tyrosyl-[glycogenin] + UDP + H(+). It catalyses the reaction [1,4-alpha-D-glucosyl](n)-L-tyrosyl-[glycogenin] + UDP-alpha-D-glucose = [1,4-alpha-D-glucosyl](n+1)-L-tyrosyl-[glycogenin] + UDP + H(+). Its function is as follows. Glycogenin participates in the glycogen biosynthetic process along with glycogen synthase and glycogen branching enzyme. It catalyzes the formation of a short alpha (1,4)-glucosyl chain covalently attached via a glucose 1-O-tyrosyl linkage to internal tyrosine residues and these chains act as primers for the elongation reaction catalyzed by glycogen synthase. In Komagataella phaffii (strain GS115 / ATCC 20864) (Yeast), this protein is Glycogenin.